Here is a 244-residue protein sequence, read N- to C-terminus: Mediator of RNA polymerase II transcription subunit 8 (244 aa).

A coiled-coil region spans residues 6 to 30 (QEQLKTLEQSRQRLVQLTRSLASLI).

The protein belongs to the Mediator complex subunit 8 family. As to quaternary structure, component of the Mediator complex.

It localises to the nucleus. Functionally, component of the Mediator complex, a coactivator involved in the regulated transcription of nearly all RNA polymerase II-dependent genes. Mediator functions as a bridge to convey information from gene-specific regulatory proteins to the basal RNA polymerase II transcription machinery. Mediator is recruited to promoters by direct interactions with regulatory proteins and serves as a scaffold for the assembly of a functional preinitiation complex with RNA polymerase II and the general transcription factors. The polypeptide is Mediator of RNA polymerase II transcription subunit 8 (med8) (Aspergillus oryzae (strain ATCC 42149 / RIB 40) (Yellow koji mold)).